A 249-amino-acid chain; its full sequence is RNA polymerase sigma factor SigI3 (249 aa).

The Polymerase core binding motif lies at 60-73 (EEFSIGLAAFNEAI). A DNA-binding region (H-T-H motif) is located at residues 199–218 (MKEVLSRIKVNHKTIQRNRK).

Belongs to the sigma-70 factor family. SigI subfamily. As to quaternary structure, interacts with RsgI3.

Its subcellular location is the cytoplasm. Negatively regulated by the anti-sigma-I factor RsgI3. Binding of the polysaccharide substrate to RsgI3 may lead to the release and activation of SigI3. Its function is as follows. Sigma factors are initiation factors that promote the attachment of RNA polymerase to specific initiation sites and are then released. This sigma factor is involved in regulation of cellulosomal genes via an external polysaccharide-sensing mechanism. Recognizes the predicted promoters associated with sigI3 itself, pl11, ce12 and cipA. In Acetivibrio thermocellus (strain ATCC 27405 / DSM 1237 / JCM 9322 / NBRC 103400 / NCIMB 10682 / NRRL B-4536 / VPI 7372) (Clostridium thermocellum), this protein is RNA polymerase sigma factor SigI3.